The following is a 421-amino-acid chain: 3-phosphoshikimate 1-carboxyvinyltransferase (421 aa).

3-phosphoshikimate is bound by residues Lys19, Ser20, and Arg24. Lys19 lines the phosphoenolpyruvate pocket. Residues Gly88 and Arg116 each contribute to the phosphoenolpyruvate site. 3-phosphoshikimate contacts are provided by Ser160, Gln162, Asp307, and Lys334. Gln162 serves as a coordination point for phosphoenolpyruvate. The active-site Proton acceptor is Asp307. Arg338 and Arg380 together coordinate phosphoenolpyruvate.

This sequence belongs to the EPSP synthase family. In terms of assembly, monomer.

It localises to the cytoplasm. It carries out the reaction 3-phosphoshikimate + phosphoenolpyruvate = 5-O-(1-carboxyvinyl)-3-phosphoshikimate + phosphate. It participates in metabolic intermediate biosynthesis; chorismate biosynthesis; chorismate from D-erythrose 4-phosphate and phosphoenolpyruvate: step 6/7. Catalyzes the transfer of the enolpyruvyl moiety of phosphoenolpyruvate (PEP) to the 5-hydroxyl of shikimate-3-phosphate (S3P) to produce enolpyruvyl shikimate-3-phosphate and inorganic phosphate. In Thermotoga sp. (strain RQ2), this protein is 3-phosphoshikimate 1-carboxyvinyltransferase.